Reading from the N-terminus, the 514-residue chain is Na(+)/H(+) antiporter NhaB (514 aa).

The next 12 membrane-spanning stretches (helical) occupy residues 23 to 43 (LALLVFLIINPFIFLANPFIA), 63 to 83 (PLLPGGLLAIEAVIIGMTSAA), 97 to 117 (LLLMFMVAGIYFMKQLLLFIF), 120 to 140 (LLLSIRSKMVLSLAFCVAAAF), 144 to 164 (FLDALTVVAVVISVAVGFYGI), 202 to 222 (LMMHAGVGTALGGVMTMVGEP), 238 to 258 (FFLRMSPVTVPVLVCGLLTCM), 303 to 323 (AVIGVWLVTALALHLAEVGLI), 357 to 377 (LTVFFSIVAVIIDQHLFAPII), 391 to 411 (LFYLFNGLLSSISDNVFVGTI), 447 to 467 (ATPNGQAAFLFLLTSALAPLI), and 475 to 495 (VWMALPYTIVLTLIGLLCVEF).

The protein belongs to the NhaB Na(+)/H(+) (TC 2.A.34) antiporter family.

It localises to the cell inner membrane. It carries out the reaction 2 Na(+)(in) + 3 H(+)(out) = 2 Na(+)(out) + 3 H(+)(in). Na(+)/H(+) antiporter that extrudes sodium in exchange for external protons. The sequence is that of Na(+)/H(+) antiporter NhaB from Salmonella newport (strain SL254).